The chain runs to 901 residues: Protein translocase subunit SecA (901 aa).

Residues glutamine 87, 105 to 109 (GEGKT), and aspartate 512 each bind ATP. The disordered stretch occupies residues 853–901 (QMQQLSHQTDENEAAEAIAAQTGDRKVGRNDPCPCGSGKKYKSCHGRLS). Cysteine 885, cysteine 887, cysteine 896, and histidine 897 together coordinate Zn(2+). Residues 891-901 (KKYKSCHGRLS) are compositionally biased toward basic residues.

The protein belongs to the SecA family. Monomer and homodimer. Part of the essential Sec protein translocation apparatus which comprises SecA, SecYEG and auxiliary proteins SecDF-YajC and YidC. Requires Zn(2+) as cofactor.

Its subcellular location is the cell inner membrane. It is found in the cytoplasm. The catalysed reaction is ATP + H2O + cellular proteinSide 1 = ADP + phosphate + cellular proteinSide 2.. Functionally, part of the Sec protein translocase complex. Interacts with the SecYEG preprotein conducting channel. Has a central role in coupling the hydrolysis of ATP to the transfer of proteins into and across the cell membrane, serving both as a receptor for the preprotein-SecB complex and as an ATP-driven molecular motor driving the stepwise translocation of polypeptide chains across the membrane. This Enterobacter sp. (strain 638) protein is Protein translocase subunit SecA.